A 228-amino-acid polypeptide reads, in one-letter code: Superoxide dismutase [Mn] (228 aa).

The N-terminal stretch at 1–23 (MTRSLKTTLILLASSVISMSALA) is a signal peptide. Histidine 49, histidine 100, aspartate 188, and histidine 192 together coordinate Mn(2+).

Belongs to the iron/manganese superoxide dismutase family. The cofactor is Mn(2+).

The protein resides in the periplasm. It catalyses the reaction 2 superoxide + 2 H(+) = H2O2 + O2. Destroys superoxide anion radicals which are normally produced within the cells and which are toxic to biological systems. The protein is Superoxide dismutase [Mn] (sodA) of Acinetobacter baylyi (strain ATCC 33305 / BD413 / ADP1).